We begin with the raw amino-acid sequence, 513 residues long: ATP synthase subunit alpha (513 aa).

An ATP-binding site is contributed by 169–176 (GDRQTGKT).

Belongs to the ATPase alpha/beta chains family. As to quaternary structure, F-type ATPases have 2 components, CF(1) - the catalytic core - and CF(0) - the membrane proton channel. CF(1) has five subunits: alpha(3), beta(3), gamma(1), delta(1), epsilon(1). CF(0) has three main subunits: a(1), b(2) and c(9-12). The alpha and beta chains form an alternating ring which encloses part of the gamma chain. CF(1) is attached to CF(0) by a central stalk formed by the gamma and epsilon chains, while a peripheral stalk is formed by the delta and b chains.

It is found in the cell inner membrane. The catalysed reaction is ATP + H2O + 4 H(+)(in) = ADP + phosphate + 5 H(+)(out). Functionally, produces ATP from ADP in the presence of a proton gradient across the membrane. The alpha chain is a regulatory subunit. This chain is ATP synthase subunit alpha, found in Bordetella avium (strain 197N).